Here is a 943-residue protein sequence, read N- to C-terminus: Conidiophore development regulator abaA (943 aa).

Disordered stretches follow at residues 1 to 69 (MSSS…FNGG) and 111 to 133 (TSRQHHHVPPPLPQVPTRYHQRG). Positions 29 to 43 (IDTRRSFHGDSRLPL) are enriched in basic and acidic residues. The span at 59-68 (PSSAHSSFNG) shows a compositional bias: polar residues. The segment at residues 161 to 254 (QKDKGGVWRR…QVVKKFFEDL (94 aa)) is a DNA-binding region (TEA). Positions 537-555 (EHQRKKEKRSCGKKPDLER) are enriched in basic and acidic residues. Disordered regions lie at residues 537 to 575 (EHQRKKEKRSCGKKPDLERSASSSKRKRSEDEGDAAAWT) and 809 to 901 (GAAG…HHPG). A compositionally biased stretch (low complexity) spans 865–889 (DSWTAGSSAGGAPAATPTGPDWGPT).

The protein belongs to the TEC1 family.

The protein resides in the nucleus. In terms of biological role, brlA, abaA and wetA are pivotal regulators of conidiophore development and conidium maturation. They act individually and together to regulate their own expression and that of numerous other sporulation-specific genes. Binds to the sequence 5'-CATTCY-3', where Y is a pyrimidine, making both major- and minor-groove contacts. The chain is Conidiophore development regulator abaA from Hapsidospora chrysogena (Acremonium chrysogenum).